The sequence spans 149 residues: UPF0260 protein Avin_32930 (149 aa).

Belongs to the UPF0260 family.

This chain is UPF0260 protein Avin_32930, found in Azotobacter vinelandii (strain DJ / ATCC BAA-1303).